A 222-amino-acid chain; its full sequence is Acyl-protein thioesterase 1 homolog 2 (222 aa).

Residues Ser-116, Asp-169, and His-202 each act as charge relay system in the active site.

This sequence belongs to the AB hydrolase superfamily. AB hydrolase 2 family.

It is found in the cytoplasm. Its subcellular location is the nucleus. The enzyme catalyses S-hexadecanoyl-L-cysteinyl-[protein] + H2O = L-cysteinyl-[protein] + hexadecanoate + H(+). Hydrolyzes fatty acids from S-acylated cysteine residues in proteins with a strong preference for palmitoylated G-alpha proteins over other acyl substrates. Mediates the deacylation of G-alpha proteins such as GPA1 in vivo, but has weak or no activity toward palmitoylated Ras proteins. Has weak lysophospholipase activity in vitro; however such activity may not exist in vivo. This chain is Acyl-protein thioesterase 1 homolog 2, found in Dictyostelium discoideum (Social amoeba).